A 129-amino-acid chain; its full sequence is Azurin-1 (129 aa).

The region spanning 1–129 is the Plastocyanin-like domain; the sequence is AECSVDIAGN…LMKGVLKLVD (129 aa). Cys-3 and Cys-26 form a disulfide bridge. Positions 46, 112, 117, and 121 each coordinate Cu cation.

The protein resides in the periplasm. Its function is as follows. Transfers electrons from cytochrome c551 to cytochrome oxidase. This chain is Azurin-1, found in Alcaligenes xylosoxydans xylosoxydans (Achromobacter xylosoxidans).